Reading from the N-terminus, the 211-residue chain is Claudin-7 (211 aa).

Over 1 to 7 the chain is Cytoplasmic; the sequence is MANSGLQ. A helical membrane pass occupies residues 8-28; the sequence is LLGFSMAMLGWVGLIASTAIP. Over 29–81 the chain is Extracellular; sequence QWQMSSYAGDNIITAQAMYKGLWMECVTQSTGMMSCKMYDSVLALPGALQATR. The chain crosses the membrane as a helical span at residues 82 to 102; it reads ALMVVSLVLGFLAMFVATMGM. At 103–119 the chain is on the cytoplasmic side; it reads KCTRCGGDDKAKKARIA. Residues 120–140 form a helical membrane-spanning segment; it reads MTGGIVFIVAGLAALVACSWI. The Extracellular segment spans residues 141 to 160; that stretch reads GHQIVTDFYNPLTPMNVKYE. The chain crosses the membrane as a helical span at residues 161-181; sequence FGPAIFIGWAGSALVLLGGAL. The Cytoplasmic portion of the chain corresponds to 182–211; sequence LSCSCPGSESKAAYRAPRSYPKSNSSKEYV. The segment at 210-211 is interactions with TJP1, TJP2 and TJP3; the sequence is YV.

This sequence belongs to the claudin family. Directly interacts with TJP1/ZO-1, TJP2/ZO-2 and TJP3/ZO-3. The phosphorylated form interacts with EPCAM. Phosphorylated. Expressed predominantly in lung and kidney.

Its subcellular location is the cell membrane. The protein localises to the basolateral cell membrane. It localises to the cell junction. It is found in the tight junction. Plays a major role in tight junction-specific obliteration of the intercellular space, through calcium-independent cell-adhesion activity. This Mus musculus (Mouse) protein is Claudin-7 (Cldn7).